Consider the following 137-residue polypeptide: Large ribosomal subunit protein uL16 (137 aa).

This sequence belongs to the universal ribosomal protein uL16 family. Part of the 50S ribosomal subunit.

In terms of biological role, binds 23S rRNA and is also seen to make contacts with the A and possibly P site tRNAs. This is Large ribosomal subunit protein uL16 from Agrobacterium fabrum (strain C58 / ATCC 33970) (Agrobacterium tumefaciens (strain C58)).